The primary structure comprises 442 residues: PTS system oligo-beta-mannoside-specific EIIC component (442 aa).

In terms of domain architecture, PTS EIIC type-3 spans 5–411 (ISQFLVPIAG…LIVFVIWFPF (407 aa)). The next 11 helical transmembrane spans lie at 28 to 48 (AFMLAFPLTIFGSIFVVLTNL), 67 to 87 (FGIASTATMGIMSVFVVFGIG), 97 to 117 (EAVFGGAIALVSFLLLTPFII), 138 to 157 (GMFLGMITAFLSGEIYRRIV), 177 to 197 (FAALIPAFITLTVFLLINVMV), 205 to 225 (MHDVIYHAIQAPLVGLGSGII), 228 to 248 (LIAVFFIQILWFFGLHGQIII), 286 to 306 (TVGMGGTGMTLAIVFTILIFM), 329 to 349 (PIIFGLPIVMNPIIIVPWVLA), 365 to 385 (LVPPPTGVTVPWTVPLFINGI), and 391 to 411 (IMGGVMQLINLLIVFVIWFPF).

The protein localises to the cell membrane. The phosphoenolpyruvate-dependent sugar phosphotransferase system (sugar PTS), a major carbohydrate active transport system, catalyzes the phosphorylation of incoming sugar substrates concomitantly with their translocation across the cell membrane. The enzyme II GmuABC PTS system is involved in the transport of oligo-glucomannans such as cellobiose or mannobiose. This is PTS system oligo-beta-mannoside-specific EIIC component from Bacillus subtilis (strain 168).